A 160-amino-acid polypeptide reads, in one-letter code: Phosphopantetheine adenylyltransferase (160 aa).

Ser-9 serves as a coordination point for substrate. ATP contacts are provided by residues 9 to 10 (SF) and His-17. Lys-41, Ile-73, and Lys-87 together coordinate substrate. Residues 88 to 90 (GLR), Glu-98, and 122 to 128 (YSFVSSS) contribute to the ATP site.

It belongs to the bacterial CoaD family. In terms of assembly, homohexamer. The cofactor is Mg(2+).

Its subcellular location is the cytoplasm. It catalyses the reaction (R)-4'-phosphopantetheine + ATP + H(+) = 3'-dephospho-CoA + diphosphate. It functions in the pathway cofactor biosynthesis; coenzyme A biosynthesis; CoA from (R)-pantothenate: step 4/5. In terms of biological role, reversibly transfers an adenylyl group from ATP to 4'-phosphopantetheine, yielding dephospho-CoA (dPCoA) and pyrophosphate. This is Phosphopantetheine adenylyltransferase from Mycolicibacterium gilvum (strain PYR-GCK) (Mycobacterium gilvum (strain PYR-GCK)).